A 245-amino-acid polypeptide reads, in one-letter code: 1-(5-phosphoribosyl)-5-[(5-phosphoribosylamino)methylideneamino] imidazole-4-carboxamide isomerase (245 aa).

Asp-8 acts as the Proton acceptor in catalysis. Asp-130 acts as the Proton donor in catalysis.

It belongs to the HisA/HisF family.

The protein localises to the cytoplasm. The enzyme catalyses 1-(5-phospho-beta-D-ribosyl)-5-[(5-phospho-beta-D-ribosylamino)methylideneamino]imidazole-4-carboxamide = 5-[(5-phospho-1-deoxy-D-ribulos-1-ylimino)methylamino]-1-(5-phospho-beta-D-ribosyl)imidazole-4-carboxamide. It functions in the pathway amino-acid biosynthesis; L-histidine biosynthesis; L-histidine from 5-phospho-alpha-D-ribose 1-diphosphate: step 4/9. This is 1-(5-phosphoribosyl)-5-[(5-phosphoribosylamino)methylideneamino] imidazole-4-carboxamide isomerase from Azotobacter vinelandii (strain DJ / ATCC BAA-1303).